Reading from the N-terminus, the 181-residue chain is Kappa-casein (181 aa).

Positions 1 to 21 (MMRNFIVVVNILALTLPFLAA) are cleaved as a signal peptide. Residue T123 is modified to Phosphothreonine. 3 O-linked (GalNAc...) threonine glycosylation sites follow: T134, T144, and T155. S162 bears the Phosphoserine; alternate mark. O-linked (GalNAc...) serine; alternate glycosylation is present at S162. Phosphoserine is present on S178.

It belongs to the kappa-casein family. Mammary gland specific. Secreted in milk.

It localises to the secreted. Its function is as follows. Kappa-casein stabilizes micelle formation, preventing casein precipitation in milk. This chain is Kappa-casein (Csn3), found in Mus musculus (Mouse).